The sequence spans 534 residues: GMP synthase [glutamine-hydrolyzing] (534 aa).

Positions Met-20–Thr-210 constitute a Glutamine amidotransferase type-1 domain. The active-site Nucleophile is Cys-97. Residues His-184 and Glu-186 contribute to the active site. The GMPS ATP-PPase domain maps to Trp-211–Arg-409. ATP is bound at residue Ser-238–Ser-244.

In terms of assembly, homodimer.

The enzyme catalyses XMP + L-glutamine + ATP + H2O = GMP + L-glutamate + AMP + diphosphate + 2 H(+). It participates in purine metabolism; GMP biosynthesis; GMP from XMP (L-Gln route): step 1/1. Its function is as follows. Catalyzes the synthesis of GMP from XMP. The chain is GMP synthase [glutamine-hydrolyzing] from Synechococcus sp. (strain ATCC 27144 / PCC 6301 / SAUG 1402/1) (Anacystis nidulans).